The following is a 496-amino-acid chain: Squalene epoxidase ERG1 (496 aa).

At 1-16 (MSAVNVAPELINADNT) the chain is on the cytoplasmic side. A helical transmembrane segment spans residues 17–37 (ITYDAIVIGAGVIGPCVATGL). Residues 28-29 (VI), 48-49 (ER), Arg56, and Arg158 each bind FAD. Residues 38–474 (ARKGKKVLIV…FLGLPMALLE (437 aa)) lie on the Lumenal side of the membrane. Residues Lys284, Lys289, and Lys311 each participate in a glycyl lysine isopeptide (Lys-Gly) (interchain with G-Cter in ubiquitin) cross-link. FAD is bound by residues Asp335 and Met348. Residues 475–495 (GIMILITAIRVFTPFLFGELI) form a helical membrane-spanning segment. A topological domain (cytoplasmic) is located at residue Gly496.

It belongs to the squalene monooxygenase family. In terms of assembly, interacts with ERG28. The cofactor is FAD.

The protein resides in the microsome membrane. The protein localises to the endoplasmic reticulum membrane. Its subcellular location is the lipid droplet. It carries out the reaction squalene + reduced [NADPH--hemoprotein reductase] + O2 = (S)-2,3-epoxysqualene + oxidized [NADPH--hemoprotein reductase] + H2O + H(+). The protein operates within terpene metabolism; lanosterol biosynthesis; lanosterol from farnesyl diphosphate: step 2/3. Inhibited by the allylamine antimycotic drugs. Functionally, squalene epoxidase; part of the third module of ergosterol biosynthesis pathway that includes the late steps of the pathway. ERG1 catalyzes the epoxidation of squalene into 2,3-epoxysqualene. The third module or late pathway involves the ergosterol synthesis itself through consecutive reactions that mainly occur in the endoplasmic reticulum (ER) membrane. Firstly, the squalene synthase ERG9 catalyzes the condensation of 2 farnesyl pyrophosphate moieties to form squalene, which is the precursor of all steroids. Squalene synthase is crucial for balancing the incorporation of farnesyl diphosphate (FPP) into sterol and nonsterol isoprene synthesis. Secondly, the squalene epoxidase ERG1 catalyzes the stereospecific oxidation of squalene to (S)-2,3-epoxysqualene, which is considered to be a rate-limiting enzyme in steroid biosynthesis. Then, the lanosterol synthase ERG7 catalyzes the cyclization of (S)-2,3 oxidosqualene to lanosterol, a reaction that forms the sterol core. In the next steps, lanosterol is transformed to zymosterol through a complex process involving various demethylation, reduction and desaturation reactions. The lanosterol 14-alpha-demethylase ERG11 (also known as CYP51) catalyzes C14-demethylation of lanosterol to produce 4,4'-dimethyl cholesta-8,14,24-triene-3-beta-ol, which is critical for ergosterol biosynthesis. The C-14 reductase ERG24 reduces the C14=C15 double bond of 4,4-dimethyl-cholesta-8,14,24-trienol to produce 4,4-dimethyl-cholesta-8,24-dienol. 4,4-dimethyl-cholesta-8,24-dienol is substrate of the C-4 demethylation complex ERG25-ERG26-ERG27 in which ERG25 catalyzes the three-step monooxygenation required for the demethylation of 4,4-dimethyl and 4alpha-methylsterols, ERG26 catalyzes the oxidative decarboxylation that results in a reduction of the 3-beta-hydroxy group at the C-3 carbon to an oxo group, and ERG27 is responsible for the reduction of the keto group on the C-3. ERG28 has a role as a scaffold to help anchor ERG25, ERG26 and ERG27 to the endoplasmic reticulum and ERG29 regulates the activity of the iron-containing C4-methylsterol oxidase ERG25. Then, the sterol 24-C-methyltransferase ERG6 catalyzes the methyl transfer from S-adenosyl-methionine to the C-24 of zymosterol to form fecosterol. The C-8 sterol isomerase ERG2 catalyzes the reaction which results in unsaturation at C-7 in the B ring of sterols and thus converts fecosterol to episterol. The sterol-C5-desaturase ERG3 then catalyzes the introduction of a C-5 double bond in the B ring to produce 5-dehydroepisterol. The C-22 sterol desaturase ERG5 further converts 5-dehydroepisterol into ergosta-5,7,22,24(28)-tetraen-3beta-ol by forming the C-22(23) double bond in the sterol side chain. Finally, ergosta-5,7,22,24(28)-tetraen-3beta-ol is substrate of the C-24(28) sterol reductase ERG4 to produce ergosterol. This is Squalene epoxidase ERG1 from Saccharomyces cerevisiae (strain ATCC 204508 / S288c) (Baker's yeast).